A 220-amino-acid chain; its full sequence is Ras-related protein Rab-3A (220 aa).

GTP-binding residues include serine 31, serine 32, valine 33, glycine 34, lysine 35, threonine 36, serine 37, threonine 48, proline 49, serine 53, and threonine 54. Residue threonine 36 coordinates Mg(2+). Residues 49-58 carry the Switch 1 motif; the sequence is PAFVSTVGID. Mg(2+) contacts are provided by threonine 54 and aspartate 77. Glycine 80 serves as a coordination point for GTP. The Switch 2 motif lies at 80 to 96; that stretch reads GQERYRTITTAYYRGAM. Position 86 is a phosphothreonine (threonine 86). GTP-binding residues include asparagine 135, lysine 136, aspartate 138, alanine 166, and lysine 167. Residues serine 188 and serine 190 each carry the phosphoserine modification. Residues 194–220 form a disordered region; sequence ADPAVTGAKQGPQLTDQQAPPHQDCAC. S-geranylgeranyl cysteine attachment occurs at residues cysteine 218 and cysteine 220. Cysteine 220 bears the Cysteine methyl ester mark.

This sequence belongs to the small GTPase superfamily. Rab family. As to quaternary structure, interacts with RIMS1 and RIMS2. Interacts with Rabphilin-3A/RPH3A and Rab effector Noc2/RPH3AL. Interacts with SYTL4. Interacts with RAB3IP. Interacts with SGSM1 and SGSM3. Interacts with SYT1. Interacts with MYH9; this interaction is essential for lysosome exocytosis and plasma membrane repair. Interacts with STXBP1; this interaction promotes RAB3A dissociation from the vesicle membrane. Interacts with SNCA. Interacts with GDI1, GDI2, CHM and CHML; phosphorylation at Thr-86 disrupts these interactions. Interacts with MADD (via uDENN domain); the GTP-bound form is preferred for interaction. Mg(2+) is required as a cofactor. Phosphorylation of Thr-86 in the switch II region by LRRK2 prevents the association of RAB regulatory proteins, including CHM, CHML and RAB GDP dissociation inhibitors GDI1 and GDI2.

Its subcellular location is the cytoplasm. It localises to the cytosol. The protein resides in the lysosome. The protein localises to the cytoplasmic vesicle. It is found in the secretory vesicle. Its subcellular location is the cell projection. It localises to the axon. The protein resides in the cell membrane. The protein localises to the presynapse. It is found in the postsynapse. It catalyses the reaction GTP + H2O = GDP + phosphate + H(+). Regulated by guanine nucleotide exchange factors (GEFs) including RAB3IL1 and MADD which promote the exchange of bound GDP for free GTP. Regulated by GTPase activating proteins (GAPs) including RAB3GAP1 and TBC1D10B which increase the GTP hydrolysis activity. Inhibited by GDP dissociation inhibitors (GDIs) which prevent Rab-GDP dissociation. In terms of biological role, the small GTPases Rab are key regulators of intracellular membrane trafficking, from the formation of transport vesicles to their fusion with membranes. Rabs cycle between an inactive GDP-bound form and an active GTP-bound form that is able to recruit to membranes different sets of downstream effectors directly responsible for vesicle formation, movement, tethering and fusion. RAB3A plays a central role in regulated exocytosis and secretion. Controls the recruitment, tethering and docking of secretory vesicles to the plasma membrane. Upon stimulation, switches to its active GTP-bound form, cycles to vesicles and recruits effectors such as RIMS1, RIMS2, Rabphilin-3A/RPH3A, RPH3AL or SYTL4 to help the docking of vesicules onto the plasma membrane. Upon GTP hydrolysis by GTPase-activating protein, dissociates from the vesicle membrane allowing the exocytosis to proceed. Stimulates insulin secretion through interaction with RIMS2 or RPH3AL effectors in pancreatic beta cells. Regulates calcium-dependent lysosome exocytosis and plasma membrane repair (PMR) via the interaction with 2 effectors, SYTL4 and myosin-9/MYH9. Acts as a positive regulator of acrosome content secretion in sperm cells by interacting with RIMS1. Also plays a role in the regulation of dopamine release by interacting with synaptotagmin I/SYT. The sequence is that of Ras-related protein Rab-3A (RAB3A) from Sus scrofa (Pig).